Consider the following 195-residue polypeptide: MATTISAVILAGGQAKRMAGLDKGLQLLQGKPLYQHCLQRLTNQVSSISINANRHQAIYQQSGVEVFGDELEDFQGPLSGILTALERANTDFVLFVPCDSPFLPLNLCEKLQSAVENSKSLLAYANDGEREHPAFSLLSTQLKLPLRVYLQSGHRQMLQFFRQHKAISVDFSLQKQAFVNMNTLQDIEKYQNIYA.

GTP-binding positions include 10-12 (LAG), lysine 23, asparagine 51, aspartate 69, and aspartate 99. Residue aspartate 99 coordinates Mg(2+).

It belongs to the MobA family. As to quaternary structure, monomer. Requires Mg(2+) as cofactor.

It localises to the cytoplasm. The catalysed reaction is Mo-molybdopterin + GTP + H(+) = Mo-molybdopterin guanine dinucleotide + diphosphate. In terms of biological role, transfers a GMP moiety from GTP to Mo-molybdopterin (Mo-MPT) cofactor (Moco or molybdenum cofactor) to form Mo-molybdopterin guanine dinucleotide (Mo-MGD) cofactor. The sequence is that of Molybdenum cofactor guanylyltransferase from Histophilus somni (strain 2336) (Haemophilus somnus).